Here is a 132-residue protein sequence, read N- to C-terminus: Small ribosomal subunit protein uS8c (132 aa).

The protein belongs to the universal ribosomal protein uS8 family. As to quaternary structure, part of the 30S ribosomal subunit.

The protein localises to the plastid. The protein resides in the chloroplast. One of the primary rRNA binding proteins, it binds directly to 16S rRNA central domain where it helps coordinate assembly of the platform of the 30S subunit. This Huperzia lucidula (Shining clubmoss) protein is Small ribosomal subunit protein uS8c (rps8).